Consider the following 281-residue polypeptide: uncharacterized protein (281 aa).

3 helical membrane-spanning segments follow: residues 23–45 (LLLS…FFAA), 65–87 (IANF…ASLG), and 94–116 (TSVI…GSLS).

The protein belongs to the MscS (TC 1.A.23) family.

The protein resides in the cell membrane. This is an uncharacterized protein from Buchnera aphidicola subsp. Baizongia pistaciae (strain Bp).